Here is a 186-residue protein sequence, read N- to C-terminus: Large ribosomal subunit protein uL5 (186 aa).

Belongs to the universal ribosomal protein uL5 family. In terms of assembly, part of the 50S ribosomal subunit; part of the 5S rRNA/L5/L18/L25 subcomplex. Contacts the 5S rRNA and the P site tRNA. Forms a bridge to the 30S subunit in the 70S ribosome.

This is one of the proteins that bind and probably mediate the attachment of the 5S RNA into the large ribosomal subunit, where it forms part of the central protuberance. In the 70S ribosome it contacts protein S13 of the 30S subunit (bridge B1b), connecting the 2 subunits; this bridge is implicated in subunit movement. Contacts the P site tRNA; the 5S rRNA and some of its associated proteins might help stabilize positioning of ribosome-bound tRNAs. In Jannaschia sp. (strain CCS1), this protein is Large ribosomal subunit protein uL5.